The primary structure comprises 258 residues: Phosphate import ATP-binding protein PstB 2 (258 aa).

Residues 12–253 (IQVRDLNFYY…PQQKQTEDYI (242 aa)) form the ABC transporter domain. 44 to 51 (GPSGCGKS) provides a ligand contact to ATP.

The protein belongs to the ABC transporter superfamily. Phosphate importer (TC 3.A.1.7) family. The complex is composed of two ATP-binding proteins (PstB), two transmembrane proteins (PstC and PstA) and a solute-binding protein (PstS).

The protein localises to the cell inner membrane. The catalysed reaction is phosphate(out) + ATP + H2O = ADP + 2 phosphate(in) + H(+). Part of the ABC transporter complex PstSACB involved in phosphate import. Responsible for energy coupling to the transport system. The protein is Phosphate import ATP-binding protein PstB 2 of Yersinia pestis bv. Antiqua (strain Nepal516).